We begin with the raw amino-acid sequence, 425 residues long: Cyanogenic beta-glucosidase (425 aa).

A signal peptide spans 1–11 (LLSITTTHIHA). Residues Gln-44, His-148, and 193–194 (NE) contribute to the a beta-D-glucoside site. Glu-194 acts as the Proton donor in catalysis. The cysteines at positions 213 and 221 are disulfide-linked. Asn-220 carries N-linked (GlcNAc...) asparagine glycosylation. A beta-D-glucoside is bound by residues Tyr-337 and Glu-408. Glu-408 functions as the Nucleophile in the catalytic mechanism. An N-linked (GlcNAc...) asparagine glycan is attached at Asn-412.

Belongs to the glycosyl hydrolase 1 family. In terms of assembly, homodimer. In terms of tissue distribution, leaves.

The catalysed reaction is Hydrolysis of terminal, non-reducing beta-D-glucosyl residues with release of beta-D-glucose.. Hydrolyzes cyanoglucosides, contributing to the release of hydrocyanic acid, which functions as a defense mechanism against small predators, when the leaf tissue is damaged. This is Cyanogenic beta-glucosidase (LI) from Trifolium repens (Creeping white clover).